The chain runs to 70 residues: U2-agatoxin-Ao1p (70 aa).

The N-terminal stretch at 1–20 (MRAIISLILISAMVFSMIAA) is a signal peptide. Residues 21–34 (VPXXEGLQLSEDER) constitute a propeptide that is removed on maturation. 3 disulfides stabilise this stretch: C37/C53, C44/C58, and C52/C68. L69 is modified (leucine amide).

The protein belongs to the neurotoxin 01 (U2-agtx) family. Expressed by the venom gland.

The protein resides in the secreted. In terms of biological role, insect active toxin causing rapid but reversible paralysis in crickets. No activity shown in mammals. Does not show effect on mammalian voltage-gated calcium channels. The polypeptide is U2-agatoxin-Ao1p (Agelena orientalis (Funnel-web spider)).